A 347-amino-acid polypeptide reads, in one-letter code: Heat-inducible transcription repressor HrcA (347 aa).

Belongs to the HrcA family.

Functionally, negative regulator of class I heat shock genes (grpE-dnaK-dnaJ and groELS operons). Prevents heat-shock induction of these operons. The protein is Heat-inducible transcription repressor HrcA of Mycoplasmopsis pulmonis (strain UAB CTIP) (Mycoplasma pulmonis).